The sequence spans 223 residues: Guanylate kinase (223 aa).

The tract at residues 1–22 (MTADGGPDVRHGTRPEPSGDGR) is disordered. Basic and acidic residues predominate over residues 7–19 (PDVRHGTRPEPSG). A Guanylate kinase-like domain is found at 21-201 (GRVVVLSGPS…ACAELVSLLV (181 aa)). An ATP-binding site is contributed by 28–35 (GPSAVGKS). The tract at residues 204 to 223 (APDRHDTSGRTGRQTTSHPD) is disordered. A compositionally biased stretch (polar residues) spans 212-223 (GRTGRQTTSHPD).

Belongs to the guanylate kinase family.

It localises to the cytoplasm. The catalysed reaction is GMP + ATP = GDP + ADP. Essential for recycling GMP and indirectly, cGMP. The polypeptide is Guanylate kinase (Mycolicibacterium paratuberculosis (strain ATCC BAA-968 / K-10) (Mycobacterium paratuberculosis)).